The following is a 264-amino-acid chain: Propanediol uptake facilitator PduF (264 aa).

2 helical membrane passes run 10–30 (GAEFLGTGLFLFFGIGCLSAL) and 42–62 (ICIIWGLGISLAVYLTAGISG). Positions 66–68 (NPA) match the NPA 1 motif. Helical transmembrane passes span 84 to 104 (VLPYIIAQFAGAFGGALLAYV), 143 to 163 (VWQAALVEVVITSILMGMIMA), and 179 to 199 (LLIGILVAVIGASTGPLTGFA). The short motif at 201 to 203 (NPA) is the NPA 2 element. Residues 228–248 (IPYFIVPIVAPVIGACAGAAI) traverse the membrane as a helical segment.

The protein belongs to the MIP/aquaporin (TC 1.A.8) family.

The protein resides in the cell inner membrane. In terms of biological role, probably facilitates diffusion of 1,2-propanediol (1,2-PD) into the cell. Modeling suggests active transport of 1,2-PD is required at low extracellular concentrations to allow maximal growth and saturation of PduP/PduQ within the bacterial microcompartment (BMC); this protein may be the cellular transporter. Its function is as follows. The 1,2-PD-specific bacterial microcompartment (BMC) concentrates low levels of 1,2-PD catabolic enzymes, concentrates volatile reaction intermediates thus enhancing pathway flux and keeps the level of toxic, mutagenic propionaldehyde low. The polypeptide is Propanediol uptake facilitator PduF (Salmonella typhimurium (strain LT2 / SGSC1412 / ATCC 700720)).